Consider the following 136-residue polypeptide: Phosphoribosyl-AMP cyclohydrolase (136 aa).

Position 89 (D89) interacts with Mg(2+). Residue C90 coordinates Zn(2+). 2 residues coordinate Mg(2+): D91 and D93. Zn(2+) contacts are provided by C106 and C113.

Belongs to the PRA-CH family. Homodimer. The cofactor is Mg(2+). Zn(2+) serves as cofactor.

The protein localises to the cytoplasm. The enzyme catalyses 1-(5-phospho-beta-D-ribosyl)-5'-AMP + H2O = 1-(5-phospho-beta-D-ribosyl)-5-[(5-phospho-beta-D-ribosylamino)methylideneamino]imidazole-4-carboxamide. The protein operates within amino-acid biosynthesis; L-histidine biosynthesis; L-histidine from 5-phospho-alpha-D-ribose 1-diphosphate: step 3/9. Catalyzes the hydrolysis of the adenine ring of phosphoribosyl-AMP. The sequence is that of Phosphoribosyl-AMP cyclohydrolase from Bifidobacterium longum subsp. infantis (strain ATCC 15697 / DSM 20088 / JCM 1222 / NCTC 11817 / S12).